Reading from the N-terminus, the 21-residue chain is Cytoplasmic filament protein A (21 aa).

The interval 1–21 is disordered; that stretch reads AILELPQSPNVFHPEKPSAVG.

Its subcellular location is the cytoplasm. Functionally, component of the cytoplasmic filaments that run the length of the organism just underneath the cytoplasmic membrane. The protein is Cytoplasmic filament protein A (cfpA) of Treponema phagedenis.